We begin with the raw amino-acid sequence, 310 residues long: MTNTIYNKNIISISDLSRSELELIVATANELKQNPRPELLKNKVVASCFFEASTRTRLSFETAVQRLGGSIIGFPDGGNTSLGKKGETLADSVQVISSYCDAFFIRHNQEGAARLASEFSSVPVINGGDGSNQHPTQTLLDLFSIYETQGTLEKLQVAFVGDLKYGRTVHSLTQALSLFDCEFHFVAPKALLMPDYIIDELKEKGCKYTLHETLDEIMDSLDILYMTRVQKERFDETEYQHLKSSFILTANMLKGVKDNLKILHPLPRVDEITTDVDSTPYAYYFQQAKNGVYARQALLTLVLTNEFGDL.

2 residues coordinate carbamoyl phosphate: Arg-55 and Thr-56. Lys-85 contributes to the L-aspartate binding site. Residues Arg-106, His-134, and Gln-137 each contribute to the carbamoyl phosphate site. Residues Arg-167 and Arg-228 each coordinate L-aspartate. 2 residues coordinate carbamoyl phosphate: Leu-266 and Pro-267.

The protein belongs to the aspartate/ornithine carbamoyltransferase superfamily. ATCase family. As to quaternary structure, heterododecamer (2C3:3R2) of six catalytic PyrB chains organized as two trimers (C3), and six regulatory PyrI chains organized as three dimers (R2).

The catalysed reaction is carbamoyl phosphate + L-aspartate = N-carbamoyl-L-aspartate + phosphate + H(+). It participates in pyrimidine metabolism; UMP biosynthesis via de novo pathway; (S)-dihydroorotate from bicarbonate: step 2/3. Functionally, catalyzes the condensation of carbamoyl phosphate and aspartate to form carbamoyl aspartate and inorganic phosphate, the committed step in the de novo pyrimidine nucleotide biosynthesis pathway. This chain is Aspartate carbamoyltransferase catalytic subunit 2, found in Shewanella halifaxensis (strain HAW-EB4).